The primary structure comprises 648 residues: Macrolide export ATP-binding/permease protein MacB 1 (648 aa).

The 239-residue stretch at 6-244 folds into the ABC transporter domain; it reads LQLSGIRRHF…PAPTTSRADT (239 aa). 42-49 lines the ATP pocket; it reads GASGSGKS. The disordered stretch occupies residues 222 to 248; that stretch reads VVADRRREPTPPSPAPTTSRADTGGRG. A run of 4 helical transmembrane segments spans residues 273 to 293, 521 to 541, 578 to 598, and 613 to 633; these read FLTMLGIIIGIAAVVSVVALG, LTLLIAMIALISLVVGGIGVM, LVCLLGGAAGVLLSLLIGVLF, and AVLMAFFCSSLIGVLFGFFPA.

The protein belongs to the ABC transporter superfamily. Macrolide exporter (TC 3.A.1.122) family. In terms of assembly, homodimer. Part of the tripartite efflux system MacAB-TolC, which is composed of an inner membrane transporter, MacB, a periplasmic membrane fusion protein, MacA, and an outer membrane component, TolC. The complex forms a large protein conduit and can translocate molecules across both the inner and outer membranes. Interacts with MacA.

The protein resides in the cell inner membrane. Part of the tripartite efflux system MacAB-TolC. MacB is a non-canonical ABC transporter that contains transmembrane domains (TMD), which form a pore in the inner membrane, and an ATP-binding domain (NBD), which is responsible for energy generation. Confers resistance against macrolides. This chain is Macrolide export ATP-binding/permease protein MacB 1, found in Aeromonas hydrophila subsp. hydrophila (strain ATCC 7966 / DSM 30187 / BCRC 13018 / CCUG 14551 / JCM 1027 / KCTC 2358 / NCIMB 9240 / NCTC 8049).